The following is a 416-amino-acid chain: Serine/threonine transporter SstT (416 aa).

9 helical membrane passes run 14-34 (GSIV…ALLS), 43-63 (FLGT…VFVL), 82-102 (VLVL…VASF), 141-161 (ALAT…GVAL), 192-212 (IGVF…ALMG), 220-240 (LLGS…FLAI), 298-318 (MAGA…TLGV), 339-359 (ASGV…LFGI), and 363-383 (VAMQ…SAET).

It belongs to the dicarboxylate/amino acid:cation symporter (DAACS) (TC 2.A.23) family.

It is found in the cell inner membrane. The enzyme catalyses L-serine(in) + Na(+)(in) = L-serine(out) + Na(+)(out). It carries out the reaction L-threonine(in) + Na(+)(in) = L-threonine(out) + Na(+)(out). In terms of biological role, involved in the import of serine and threonine into the cell, with the concomitant import of sodium (symport system). The chain is Serine/threonine transporter SstT from Laribacter hongkongensis (strain HLHK9).